We begin with the raw amino-acid sequence, 338 residues long: Phosphate acyltransferase (338 aa).

It belongs to the PlsX family. As to quaternary structure, homodimer. Probably interacts with PlsY.

The protein resides in the cytoplasm. The catalysed reaction is a fatty acyl-[ACP] + phosphate = an acyl phosphate + holo-[ACP]. The protein operates within lipid metabolism; phospholipid metabolism. Its function is as follows. Catalyzes the reversible formation of acyl-phosphate (acyl-PO(4)) from acyl-[acyl-carrier-protein] (acyl-ACP). This enzyme utilizes acyl-ACP as fatty acyl donor, but not acyl-CoA. In Endomicrobium trichonymphae, this protein is Phosphate acyltransferase.